A 268-amino-acid polypeptide reads, in one-letter code: Tryptophan synthase alpha chain (268 aa).

Residues glutamate 49 and aspartate 60 each act as proton acceptor in the active site.

Belongs to the TrpA family. As to quaternary structure, tetramer of two alpha and two beta chains.

It catalyses the reaction (1S,2R)-1-C-(indol-3-yl)glycerol 3-phosphate + L-serine = D-glyceraldehyde 3-phosphate + L-tryptophan + H2O. The protein operates within amino-acid biosynthesis; L-tryptophan biosynthesis; L-tryptophan from chorismate: step 5/5. Functionally, the alpha subunit is responsible for the aldol cleavage of indoleglycerol phosphate to indole and glyceraldehyde 3-phosphate. The polypeptide is Tryptophan synthase alpha chain (Escherichia fergusonii (strain ATCC 35469 / DSM 13698 / CCUG 18766 / IAM 14443 / JCM 21226 / LMG 7866 / NBRC 102419 / NCTC 12128 / CDC 0568-73)).